Here is a 121-residue protein sequence, read N- to C-terminus: UPF0102 protein Dhaf_3740 (121 aa).

The protein belongs to the UPF0102 family.

The chain is UPF0102 protein Dhaf_3740 from Desulfitobacterium hafniense (strain DSM 10664 / DCB-2).